The primary structure comprises 149 residues: SsrA-binding protein (149 aa).

It belongs to the SmpB family.

The protein localises to the cytoplasm. Its function is as follows. Required for rescue of stalled ribosomes mediated by trans-translation. Binds to transfer-messenger RNA (tmRNA), required for stable association of tmRNA with ribosomes. tmRNA and SmpB together mimic tRNA shape, replacing the anticodon stem-loop with SmpB. tmRNA is encoded by the ssrA gene; the 2 termini fold to resemble tRNA(Ala) and it encodes a 'tag peptide', a short internal open reading frame. During trans-translation Ala-aminoacylated tmRNA acts like a tRNA, entering the A-site of stalled ribosomes, displacing the stalled mRNA. The ribosome then switches to translate the ORF on the tmRNA; the nascent peptide is terminated with the 'tag peptide' encoded by the tmRNA and targeted for degradation. The ribosome is freed to recommence translation, which seems to be the essential function of trans-translation. This Thermosipho africanus (strain TCF52B) protein is SsrA-binding protein.